We begin with the raw amino-acid sequence, 286 residues long: Shikimate dehydrogenase (NADP(+)) (286 aa).

Residues 22 to 24 (SRS) and threonine 71 contribute to the shikimate site. Lysine 75 acts as the Proton acceptor in catalysis. Glutamate 87 is a binding site for NADP(+). The shikimate site is built by asparagine 96 and aspartate 111. Residues 136-140 (GAGGA), 160-165 (NRTVER), and isoleucine 225 contribute to the NADP(+) site. Tyrosine 227 contacts shikimate. Glycine 248 contacts NADP(+).

Belongs to the shikimate dehydrogenase family. Homodimer.

It catalyses the reaction shikimate + NADP(+) = 3-dehydroshikimate + NADPH + H(+). It participates in metabolic intermediate biosynthesis; chorismate biosynthesis; chorismate from D-erythrose 4-phosphate and phosphoenolpyruvate: step 4/7. Functionally, involved in the biosynthesis of the chorismate, which leads to the biosynthesis of aromatic amino acids. Catalyzes the reversible NADPH linked reduction of 3-dehydroshikimate (DHSA) to yield shikimate (SA). This is Shikimate dehydrogenase (NADP(+)) from Rhizobium rhizogenes (strain K84 / ATCC BAA-868) (Agrobacterium radiobacter).